A 1452-amino-acid chain; its full sequence is MAEGYDAALSVAEWLRALHLEQYTALFEQHGLVWATECQGLSDAGLLDMGMHLPGHRRRILAGLHRAHAPPVPLPRPAPRPVPMKRHIFRSPPVPVTPPEPPPTAGEDEGLPAAPPIPPRRSCLPPACFTPTSTAAPDPVLPPLPAKRHLVEPSVPPVPPRTGPPYPQASLLAKEELLLPSVSPRSQPEPAETPSTLLPAFPQGPLQPPSPPPCPPVIPPKPPRLLPEFDDSDYDDVPEEGPGAPASVMTKEEPLPSRVPRAVRVASLLSEGEELSGDDSEDDDDHAYEGIPNGGWPTSGLNPPLRSLIPDLPLHPMDELPGGPTPITPVIKAGWLDKNPPQGSYIYQKRWVRLDADYLRYFDSNKDAYSKRFVPVACICRVAPIGDQKFEVITNNRTFAFRAESDVERNEWMQALQQAVVEHRARFRLSSASVLGVRGSEQPDRAGSLELRGFKNKLYVAVTGDKVQLYKNLEEFHLGIGITFIDMNVGNVKEVDRRSFDLTTPYRIFSFSADSELEKEQWLEAMQGAIAEALSTSEVAERIWAAAPNRFCADCGAAQPDWASINLCVVICKRCAGEHRGLGAGVSKVRSLKMDRKVWTEALIQLFLHLGNGPGNHFWAANVPPSEALEPSSSPGARRYHLEAKYREGKYRRYHPLFGNQEELDKALCAAVTTTDLAETQALLGCGAGVSCFSGDPAAPTPLALAEQAGQTLQMEFLRNNQSTEVPRLDSVKPLEKHYSVTLPTVSHSGFLYKTASAGKPLQDRRAREEFSRRWCVLSDGVLSYYENERAVTPNGEIRASEIVCLAVSPLDTHGFEHTFEVYTEGERLYLFGLENAELAHEWVKCIAKAFVPPLAEDLLARDFERLGRLPCKAGLSLQQAQEGWFALTGSELRAVFPEGPWEEPLQLRKLQELSIQGDSENQVLVLVERRRTLYIQGERRLDFMAWLGVIQKAAASLGDTLSEQQLGDSDIPVIVYRCVDYITQCGLTSEGIYRKCGQTSKTQRLLDSLRQDARSVHLKEGEQHVDDVSSALKRFLRDLPDGLFTRAQRLAWLEASEIEDEEEKISRYRELLVHLPPVNRATVKALISHLYCVQCFSDTNQMNTHNLAIVFGPTLFQTDGQDYKAGKVVEDLINHYVVVFSVDEEELRKQREEVTAIVKMRVAGTASGTQHAGDFICTVYLEEKKVETEQHVKIPASMTAEELTLEILDRRNVSIREKDYWTCFEVNEKEEAERPLHFAEKVLPIVHGLGIDSHLVVKKYQSMEAMLLYLASRVGDTKHGMMKFREDRSLLGLGLPSGGFHDRYFILNSSCLRLYKEVRSQRPWSGAPETSHRPEKEWPVKSLKVYLGVKKKLRPPTCWGFTVVHETEKHEKQQWYLCCDTQMELREWFATFLSVQHDGLVWPSEPSRVSRAVPEVRMGSVSLIPLRGSENEMRRSVAAFTADPLSLLRHV.

The SAM domain maps to 6–70 (DAALSVAEWL…LAGLHRAHAP (65 aa)). The segment at 81 to 90 (PVPMKRHIFR) is required for interaction with SH3KBP1. Disordered regions lie at residues 87 to 258 (HIFR…LPSR) and 271 to 304 (EGEE…LNPP). 3 stretches are compositionally biased toward pro residues: residues 92–104 (PPVP…PPPT), 154–167 (SVPP…PPYP), and 205–225 (PLQP…PPRL). 2 stretches are compositionally biased toward acidic residues: residues 228–239 (EFDDSDYDDVPE) and 271–286 (EGEE…DDDH). Position 232 is a phosphoserine (Ser232). Tyr234 is modified (phosphotyrosine; by PTK6). The region spanning 329–421 (PVIKAGWLDK…WMQALQQAVV (93 aa)) is the PH 1 domain. Ser430 carries the post-translational modification Phosphoserine. The PH 2 domain occupies 442–531 (QPDRAGSLEL…WLEAMQGAIA (90 aa)). Tyr506 is modified (phosphotyrosine). The Arf-GAP domain maps to 537–662 (SEVAERIWAA…RYHPLFGNQE (126 aa)). The C4-type zinc-finger motif lies at 552-575 (CADCGAAQPDWASINLCVVICKRC). Ser740 is modified (phosphoserine). Residues 745–852 (TVSHSGFLYK…WVKCIAKAFV (108 aa)) form the PH 3 domain. Positions 956–1141 (ASLGDTLSEQ…DLINHYVVVF (186 aa)) constitute a Rho-GAP domain. Positions 1174 to 1263 (GDFICTVYLE…SHLVVKKYQS (90 aa)) constitute a Ras-associating domain. Positions 1276–1398 (GDTKHGMMKF…WFATFLSVQH (123 aa)) constitute a PH 4 domain. Residues Ser1430 and Ser1437 each carry the phosphoserine modification.

As to quaternary structure, interacts with SH3KBP1/CIN85 (via SH3 domains). The interaction is independent of EGF and does not affect ARAP1 GTPase-activating activity but is involved in regulating ubiquitination and endocytic trafficking of EGFR. ARAP1 competes with E3 ubiquitin-protein ligase CBL for binding to SH3KBP1, preventing interaction of CBL with SH3KBP1; this is likely to regulate SH3KBP1-mediated internalization of EGFR. Interacts with TNFRSF10A. In terms of processing, phosphorylated by PTK6 following EGF stimulation which enhances EGFR signaling by delaying EGFR down-regulation; the interaction is mediated by the SH2 domain of PTK6. Phosphorylation promotes association with the Golgi apparatus and endosomes. In terms of tissue distribution, expressed in the retina where it is detected in Mueller glia (at protein level). Also detected in the retinal pigment epithelium (at protein level). Expressed in osteoclasts (at protein level).

The protein resides in the cytoplasm. Its subcellular location is the golgi apparatus. It is found in the trans-Golgi network. It localises to the golgi stack membrane. The protein localises to the cell membrane. The protein resides in the endosome. Its subcellular location is the multivesicular body. It is found in the cell projection. It localises to the ruffle. The protein localises to the podosome. The protein resides in the early endosome. Functionally, phosphatidylinositol 3,4,5-trisphosphate-dependent GTPase-activating protein that modulates actin cytoskeleton remodeling by regulating ARF and RHO family members. Activated by phosphatidylinositol 3,4,5-trisphosphate (PtdIns(3,4,5)P3) binding and, to a lesser extent, by phosphatidylinositol 3,4-bisphosphate (PtdIns(3,4)P2) binding. Has a preference for ARF1 and ARF5. Positively regulates the ring size of circular dorsal ruffles and promotes macropinocytosis. Acts as a bridging factor in osteoclasts to control actin and membrane dynamics. Regulates the condensing of osteoclast podosomes into sealing zones which segregate the bone-facing membrane from other membrane domains and are required for osteoclast resorption activity. Also regulates recruitment of the AP-3 complex to endosomal membranes and trafficking of lysosomal membrane proteins to the ruffled membrane border of osteoclasts to modulate bone resorption. Regulates the endocytic trafficking of EGFR. Regulates the incorporation of CD63 and CD9 into multivesicular bodies. Required in the retinal pigment epithelium (RPE) for photoreceptor survival due to its role in promoting RPE phagocytosis. In Mus musculus (Mouse), this protein is Arf-GAP with Rho-GAP domain, ANK repeat and PH domain-containing protein 1.